Reading from the N-terminus, the 346-residue chain is Phosphoribosylformylglycinamidine cyclo-ligase (346 aa).

Belongs to the AIR synthase family.

It is found in the cytoplasm. It carries out the reaction 2-formamido-N(1)-(5-O-phospho-beta-D-ribosyl)acetamidine + ATP = 5-amino-1-(5-phospho-beta-D-ribosyl)imidazole + ADP + phosphate + H(+). It participates in purine metabolism; IMP biosynthesis via de novo pathway; 5-amino-1-(5-phospho-D-ribosyl)imidazole from N(2)-formyl-N(1)-(5-phospho-D-ribosyl)glycinamide: step 2/2. In Bacillus cereus (strain AH187), this protein is Phosphoribosylformylglycinamidine cyclo-ligase.